We begin with the raw amino-acid sequence, 745 residues long: Immunoglobulin superfamily containing leucine-rich repeat protein 2 (745 aa).

The signal sequence occupies residues 1 to 18; sequence MFPLRALWLVWALLGVAG. The LRRNT domain occupies 19–51; sequence SCPEPCACVDKYAHQFADCAYKELREVPEGLPA. The Extracellular portion of the chain corresponds to 19-589; that stretch reads SCPEPCACVD…VFSTKKELPS (571 aa). An N-linked (GlcNAc...) asparagine glycan is attached at N52. LRR repeat units follow at residues 52–73, 76–97, 100–123, 124–145, and 148–169; these read NVTTLSLSANKITVLRRGAFAD, QVTSLWLAHNEVRTVEPGALAV, QLKNLDLSHNFISSFPWSDLRNLS, ALQLLKMNHNRLGSLPRDALGA, and DLRSLRINNNRLRTLAPGTFDA. The N-linked (GlcNAc...) asparagine glycan is linked to N121. In terms of domain architecture, LRRCT spans 181–232; it reads NPFHCGCGLVWLQAWAASTRVSLPEPDSIACASPPALQGVPVYRLPALPCAP. One can recognise an Ig-like domain in the interval 233–371; that stretch reads PSVHLSAEPP…GANSTSIRVA (139 aa). An intrachain disulfide couples C260 to C355. The tract at residues 287 to 326 is disordered; that stretch reads VLSGEDDGVGAEEGEGEGDGDLLTQTQAQTPTPAPAWPAP. A compositionally biased stretch (acidic residues) spans 290-306; sequence GEDDGVGAEEGEGEGDG. 2 N-linked (GlcNAc...) asparagine glycosylation sites follow: N337 and N364. The segment at 375 to 466 is disordered; the sequence is TGPPKHAPGA…QRCGNGDPSR (92 aa). Residues 431–449 are compositionally biased toward acidic residues; sequence TETEPEEDTSEGEEAEDQI. Residues N474 and N563 are each glycosylated (N-linked (GlcNAc...) asparagine). Residues 590–610 form a helical membrane-spanning segment; the sequence is LLVIVAVSVFLLVLATVPLLG. Residues 611 to 745 are Cytoplasmic-facing; sequence AACCHLLAKH…INGNYRQTAG (135 aa). The interval 656 to 722 is disordered; it reads KSYPAGGEAG…FEAGSEYSDR (67 aa). Acidic residues predominate over residues 665-683; the sequence is GGEEPEDVQGEGLDEDAEQ. Y719 carries the post-translational modification Phosphotyrosine. S720 carries the post-translational modification Phosphoserine.

As to quaternary structure, homomultimer. Interacts with NTRK1/TrkA.

It localises to the cell membrane. Its function is as follows. Required for axon extension during neural development. The polypeptide is Immunoglobulin superfamily containing leucine-rich repeat protein 2 (ISLR2) (Homo sapiens (Human)).